The primary structure comprises 94 residues: Large ribosomal subunit protein uL23c (94 aa).

Belongs to the universal ribosomal protein uL23 family. Part of the 50S ribosomal subunit.

It is found in the plastid. It localises to the chloroplast. Functionally, binds to 23S rRNA. In Tupiella akineta (Green alga), this protein is Large ribosomal subunit protein uL23c (rpl23).